A 671-amino-acid polypeptide reads, in one-letter code: NADPH--cytochrome P450 reductase (671 aa).

Over 1-14 the chain is Lumenal; it reads MSAEHVEEVVSEEP. A helical transmembrane segment spans residues 15–35; the sequence is FLGTLDIALLVVLLVGATWYF. Topologically, residues 36 to 671 are cytoplasmic; sequence MRSRKKEEAP…QKRYSADVWS (636 aa). Residues 77 to 221 form the Flavodoxin-like domain; sequence LVVFYGSQTG…DFITWKDRFW (145 aa). Residues 83–88, 135–138, 170–179, and Asp-205 contribute to the FMN site; these read SQTGTA, ATYG, and LGNKTYEHYN. The FAD-binding FR-type domain maps to 276–515; the sequence is KNPFLASVIV…FIRKSQFRLP (240 aa). Arg-295 is a binding site for NADP(+). FAD-binding positions include 451–454, 469–471, Tyr-475, and 485–488; these read RYYS, TAV, and GVAT. NADP(+) is bound by residues Thr-529, 589–590, 595–599, and Asp-632; these read SR and KIYVT. Residue Trp-670 participates in FAD binding.

The protein belongs to the NADPH--cytochrome P450 reductase family. In the N-terminal section; belongs to the flavodoxin family. It in the C-terminal section; belongs to the flavoprotein pyridine nucleotide cytochrome reductase family. FAD serves as cofactor. Requires FMN as cofactor.

It localises to the endoplasmic reticulum membrane. It catalyses the reaction 2 oxidized [cytochrome P450] + NADPH = 2 reduced [cytochrome P450] + NADP(+) + H(+). In terms of biological role, this enzyme is required for electron transfer from NADP to cytochrome P450 in microsomes. It can also provide electron transfer to heme oxygenase and cytochrome B5. This Musca domestica (House fly) protein is NADPH--cytochrome P450 reductase.